The sequence spans 282 residues: NADPH-dependent 7-cyano-7-deazaguanine reductase (282 aa).

88–90 lines the substrate pocket; that stretch reads IES. Position 90-91 (90-91) interacts with NADPH; the sequence is SK. Cys-189 acts as the Thioimide intermediate in catalysis. Asp-196 functions as the Proton donor in the catalytic mechanism. A substrate-binding site is contributed by 228–229; sequence HE. Position 257-258 (257-258) interacts with NADPH; that stretch reads RG.

The protein belongs to the GTP cyclohydrolase I family. QueF type 2 subfamily. In terms of assembly, homodimer.

It is found in the cytoplasm. It catalyses the reaction 7-aminomethyl-7-carbaguanine + 2 NADP(+) = 7-cyano-7-deazaguanine + 2 NADPH + 3 H(+). It functions in the pathway tRNA modification; tRNA-queuosine biosynthesis. Functionally, catalyzes the NADPH-dependent reduction of 7-cyano-7-deazaguanine (preQ0) to 7-aminomethyl-7-deazaguanine (preQ1). The polypeptide is NADPH-dependent 7-cyano-7-deazaguanine reductase (Photorhabdus laumondii subsp. laumondii (strain DSM 15139 / CIP 105565 / TT01) (Photorhabdus luminescens subsp. laumondii)).